Consider the following 87-residue polypeptide: Small ribosomal subunit protein bS20 (87 aa).

It belongs to the bacterial ribosomal protein bS20 family.

Binds directly to 16S ribosomal RNA. The chain is Small ribosomal subunit protein bS20 from Clostridium perfringens (strain ATCC 13124 / DSM 756 / JCM 1290 / NCIMB 6125 / NCTC 8237 / Type A).